We begin with the raw amino-acid sequence, 365 residues long: Spermidine-binding periplasmic protein SpuE (365 aa).

The first 24 residues, Met-1–Ala-24, serve as a signal peptide directing secretion. The spermidine site is built by Thr-35, Glu-181, Asp-242, and Asn-269.

It belongs to the bacterial solute-binding protein PotD/PotF family.

It is found in the periplasm. Functionally, spermidine-binding protein probably required for its uptake into cells. Binds spermidine with high affinity (KD=14.3 nM). Does not bind putrescine, cadaverine or spermine. Spermidine binding induces large inter-domain conformational changes. Implicated in induction of type 3 secretion systems (T3SS), which play a role in virulence. The protein is Spermidine-binding periplasmic protein SpuE (spuE) of Pseudomonas aeruginosa (strain ATCC 15692 / DSM 22644 / CIP 104116 / JCM 14847 / LMG 12228 / 1C / PRS 101 / PAO1).